The sequence spans 319 residues: MKRIGVLTSGGDSPGMNAAIRAVVRKAIYHDIEVYGIYHGYAGLISGHIEKLELGSVGDIIHRGGTKLYTARCPEFKDPAVREKGIEQLKKHGIEGLVVIGGDGSYQGAKKLTEQGFPCVGVPGTIDNDIPGTDFTIGFDTALNTVIDAIDKIRDTATSHERTYVIEVMGRHAGDIALWAGLADGAETILIPEAEYDMDDVIARLKRGSERGKKHSIIVVAEGVGSAIDIGKKIEEATNFDTRVTVLGHVQRGGSPSAQDRVLASRLGARAVELLMEGKGGRCVGIQNNKLVDHDIIEALAQKHVIDIDMYQLSKELSI.

ATP is bound at residue glycine 11. 21–25 (RAVVR) contributes to the ADP binding site. Residues 72-73 (RC) and 102-105 (GDGS) each bind ATP. Aspartate 103 serves as a coordination point for Mg(2+). 125-127 (TID) serves as a coordination point for substrate. Catalysis depends on aspartate 127, which acts as the Proton acceptor. ADP is bound at residue arginine 154. Substrate-binding positions include arginine 162 and 169–171 (MGR). Residues 185 to 187 (GAE), arginine 211, and 213 to 215 (KKH) each bind ADP. Substrate-binding positions include glutamate 222, arginine 243, and 249 to 252 (HVQR).

The protein belongs to the phosphofructokinase type A (PFKA) family. ATP-dependent PFK group I subfamily. Prokaryotic clade 'B1' sub-subfamily. Homotetramer. Requires Mg(2+) as cofactor.

Its subcellular location is the cytoplasm. The enzyme catalyses beta-D-fructose 6-phosphate + ATP = beta-D-fructose 1,6-bisphosphate + ADP + H(+). Its pathway is carbohydrate degradation; glycolysis; D-glyceraldehyde 3-phosphate and glycerone phosphate from D-glucose: step 3/4. With respect to regulation, allosterically activated by ADP and other diphosphonucleosides, and allosterically inhibited by phosphoenolpyruvate. Its function is as follows. Catalyzes the phosphorylation of D-fructose 6-phosphate to fructose 1,6-bisphosphate by ATP, the first committing step of glycolysis. The polypeptide is ATP-dependent 6-phosphofructokinase (Bacillus cytotoxicus (strain DSM 22905 / CIP 110041 / 391-98 / NVH 391-98)).